We begin with the raw amino-acid sequence, 185 residues long: Ribosomal RNA small subunit methyltransferase G (185 aa).

S-adenosyl-L-methionine is bound by residues G59, F64, 110–111, and R127; that span reads IQ.

This sequence belongs to the methyltransferase superfamily. RNA methyltransferase RsmG family.

Its subcellular location is the cytoplasm. It carries out the reaction guanosine(527) in 16S rRNA + S-adenosyl-L-methionine = N(7)-methylguanosine(527) in 16S rRNA + S-adenosyl-L-homocysteine. Functionally, specifically methylates the N7 position of guanine in position 527 of 16S rRNA. The chain is Ribosomal RNA small subunit methyltransferase G from Helicobacter hepaticus (strain ATCC 51449 / 3B1).